Here is a 190-residue protein sequence, read N- to C-terminus: dCTP deaminase, dUMP-forming (190 aa).

Residues 101 to 106, Asp-119, 127 to 129, Gln-148, Tyr-162, and Gln-174 each bind dCTP; these read KSSLGR and TLE. Residue Glu-129 is the Proton donor/acceptor of the active site. The interval 163 to 190 is disordered; it reads GSTRVGSKYQGQRGPTPSRSYQNFITST. A compositionally biased stretch (polar residues) spans 171–190; that stretch reads YQGQRGPTPSRSYQNFITST.

The protein belongs to the dCTP deaminase family. In terms of assembly, homotrimer.

The catalysed reaction is dCTP + 2 H2O = dUMP + NH4(+) + diphosphate. The protein operates within pyrimidine metabolism; dUMP biosynthesis; dUMP from dCTP: step 1/1. Its function is as follows. Bifunctional enzyme that catalyzes both the deamination of dCTP to dUTP and the hydrolysis of dUTP to dUMP without releasing the toxic dUTP intermediate. This is dCTP deaminase, dUMP-forming from Mycolicibacterium paratuberculosis (strain ATCC BAA-968 / K-10) (Mycobacterium paratuberculosis).